A 275-amino-acid chain; its full sequence is Sulfur carrier protein FdhD (275 aa).

The active-site Cysteine persulfide intermediate is Cys-121. A Mo-bis(molybdopterin guanine dinucleotide)-binding site is contributed by 258–263; it reads FSKPGR.

It belongs to the FdhD family.

The protein localises to the cytoplasm. Its function is as follows. Required for formate dehydrogenase (FDH) activity. Acts as a sulfur carrier protein that transfers sulfur from IscS to the molybdenum cofactor prior to its insertion into FDH. The chain is Sulfur carrier protein FdhD from Yersinia enterocolitica serotype O:8 / biotype 1B (strain NCTC 13174 / 8081).